The following is a 259-amino-acid chain: Archaerhodopsin-2 (259 aa).

The propeptide occupies 1–6 (MDPIAL). Position 7 is a pyrrolidone carboxylic acid (glutamine 7). At 7 to 18 (QAGFDLLNDGRP) the chain is on the extracellular side. Residues 19 to 40 (ETLWLGIGTLLMLIGTFYFIAR) traverse the membrane as a helical segment. Over 41-49 (GWGVTDKEA) the chain is Cytoplasmic. Residues 50-71 (REYYAITILVPGIASAAYLAMF) traverse the membrane as a helical segment. Residues 72 to 90 (FGIGVTEVELASGTVLDIY) are Extracellular-facing. A helical membrane pass occupies residues 91-112 (YARYADWLFTTPLLLLDLALLA). At 113–115 (KVD) the chain is on the cytoplasmic side. The chain crosses the membrane as a helical span at residues 116-138 (RVTIGTLIGVDALMIVTGLIGAL). The Extracellular portion of the chain corresponds to 139–142 (SKTP). A helical membrane pass occupies residues 143-171 (LARYTWWLFSTIAFLFVLYYLLTSLRSAA). At 172 to 174 (AKR) the chain is on the cytoplasmic side. The chain crosses the membrane as a helical span at residues 175–203 (SEEVRSTFNTLTALVAVLWTAYPILWIVG). Over 204-211 (TEGAGVVG) the chain is Extracellular. Residues 212–244 (LGIETLAFMVLDVTAKVGFGFVLLRSRAILGET) traverse the membrane as a helical segment. Lysine 227 is modified (N6-(retinylidene)lysine). Residues 245–259 (EAPEPSAGADASAAD) are Cytoplasmic-facing.

Belongs to the archaeal/bacterial/fungal opsin family.

It localises to the cell membrane. In terms of biological role, light-driven proton pump. It may interact with bacterioruberin in the claret membrane. The polypeptide is Archaerhodopsin-2 (Halobacterium sp. (strain aus-2)).